The primary structure comprises 353 residues: Heterogeneous nuclear ribonucleoproteins A2/B1 (353 aa).

Position 1 is an N-acetylmethionine (methionine 1). Threonine 4 bears the Phosphothreonine mark. The short motif at proline 9–arginine 15 is the Nuclear localization signal element. RRM domains follow at residues arginine 21–lysine 104 and lysine 112–glutamine 191. Residue lysine 22 forms a Glycyl lysine isopeptide (Lys-Gly) (interchain with G-Cter in SUMO2) linkage. Position 29 is a phosphoserine (serine 29). Arginine 38 carries the post-translational modification Omega-N-methylarginine. Residue serine 85 is modified to Phosphoserine. The residue at position 104 (lysine 104) is an N6,N6-dimethyllysine; alternate. Lysine 104 participates in a covalent cross-link: Glycyl lysine isopeptide (Lys-Gly) (interchain with G-Cter in SUMO2); alternate. Glycyl lysine isopeptide (Lys-Gly) (interchain with G-Cter in SUMO2) cross-links involve residues lysine 112, lysine 120, and lysine 137. Threonine 140 is subject to Phosphothreonine. Serine 149 carries the phosphoserine modification. Lysine 152 is covalently cross-linked (Glycyl lysine isopeptide (Lys-Gly) (interchain with G-Cter in SUMO2)). At threonine 159 the chain carries Phosphothreonine. Glycyl lysine isopeptide (Lys-Gly) (interchain with G-Cter in SUMO2); alternate cross-links involve residues lysine 168 and lysine 173. An N6-acetyllysine; alternate mark is found at lysine 168 and lysine 173. Residue threonine 176 is modified to Phosphothreonine. A Glycyl lysine isopeptide (Lys-Gly) (interchain with G-Cter in SUMO2) cross-link involves residue lysine 186. Phosphoserine is present on residues serine 189 and serine 201. Residues methionine 193–tyrosine 353 form a disordered region. The span at glycine 202–proline 223 shows a compositional bias: gly residues. The residue at position 203 (arginine 203) is an Asymmetric dimethylarginine; alternate. Arginine 203 bears the Dimethylated arginine; alternate mark. Residue arginine 203 is modified to Omega-N-methylarginine; alternate. At serine 212 the chain carries Phosphoserine. Asymmetric dimethylarginine; alternate is present on arginine 213. Arginine 213 carries the post-translational modification Dimethylated arginine; alternate. The residue at position 213 (arginine 213) is an Omega-N-methylarginine; alternate. Serine 225 carries the post-translational modification Phosphoserine. The residue at position 228 (arginine 228) is an Omega-N-methylarginine. Phosphoserine is present on residues serine 231 and serine 236. Arginine 238 is modified (omega-N-methylarginine). Serine 259 is subject to Phosphoserine. An Asymmetric dimethylarginine; alternate modification is found at arginine 266. Omega-N-methylarginine; alternate is present on arginine 266. The segment at glutamine 308 to tyrosine 347 is nuclear targeting sequence. Over residues asparagine 320–tyrosine 353 the composition is skewed to gly residues. Serine 324 carries the phosphoserine modification. Position 325 is an omega-N-methylarginine (arginine 325). The residue at position 331 (tyrosine 331) is a Phosphotyrosine. Phosphoserine occurs at positions 341 and 344. Tyrosine 347 carries the post-translational modification Phosphotyrosine. The residue at position 350 (arginine 350) is an Omega-N-methylarginine.

In terms of assembly, homodimer; dimerization is required for nucleocytoplasmic translocation. Identified in the spliceosome C complex. Identified in a IGF2BP1-dependent mRNP granule complex containing untranslated mRNAs. Interacts with IGF2BP1. Interacts with C9orf72. Interacts with DGCR8. Interacts with TARDBP. Interacts with CKAP5. Interacts with TBK1. Interacts with STING1. Interacts with SRC. Interacts with PPIA/CYPA. Interacts (via C-terminus) with FAM76B; the interaction results in retention of HNRNPA2B1 in the nucleus and inhibition of the NF-kappa-B-mediated inflammatory pathway. Interacts with NF-kappa-B inhibitors NFKBIA and NFKBIE; the interaction may be mediated by the RRM2 domain of HNRNPA2B1, and HNRNPA2B1 may interact simultaneously with FAM76B and either NFKBIA or NFKBIE to form a complex. Asymmetric dimethylation at Arg-266 constitutes the major methylation site. According to a report, methylation affects subcellular location and promotes nuclear localization. According to another report, methylation at Arg-266 does not influence nucleocytoplasmic shuttling. Post-translationally, sumoylated in exosomes, promoting miRNAs-binding. In the brain, isoform A2 and isoform B1 are abundant in large ganglion-type neurons, such as Purkinje cells, and are less abundant in neighboring glia cells. Isoform A2 is more abundant than isoform B1 in brain. In testis, isoform A2 and isoform B1 are present in spermatogonia and spermatocytes, but not in spermatids or sperm. Isoform A2 is more abundant in the adrenal medulla than in the cortical cells. Isoform B1 is found in both adrenal medulla and cortical cells. Isoform A2 is more abundant than isoform B1 in the adrenal gland. Isoform A2 and isoform B1 are both detected in pancreas and kidney, and at lower levels in heart and lung. Isoform B1 is more abundant than isoform A2 in heart, lung and intestine (at protein level). Isoform A2b and isoform B1b are testis-specific.

It is found in the nucleus. The protein localises to the cytoplasm. Its subcellular location is the nucleoplasm. The protein resides in the cytoplasmic granule. It localises to the secreted. It is found in the extracellular exosome. Functionally, heterogeneous nuclear ribonucleoprotein (hnRNP) that associates with nascent pre-mRNAs, packaging them into hnRNP particles. The hnRNP particle arrangement on nascent hnRNA is non-random and sequence-dependent and serves to condense and stabilize the transcripts and minimize tangling and knotting. Packaging plays a role in various processes such as transcription, pre-mRNA processing, RNA nuclear export, subcellular location, mRNA translation and stability of mature mRNAs. Forms hnRNP particles with at least 20 other different hnRNP and heterogeneous nuclear RNA in the nucleus. Involved in transport of specific mRNAs to the cytoplasm in oligodendrocytes and neurons: acts by specifically recognizing and binding the A2RE (21 nucleotide hnRNP A2 response element) or the A2RE11 (derivative 11 nucleotide oligonucleotide) sequence motifs present on some mRNAs, and promotes their transport to the cytoplasm. Specifically binds single-stranded telomeric DNA sequences, protecting telomeric DNA repeat against endonuclease digestion. Also binds other RNA molecules, such as primary miRNA (pri-miRNAs): acts as a nuclear 'reader' of the N6-methyladenosine (m6A) mark by specifically recognizing and binding a subset of nuclear m6A-containing pri-miRNAs. Binding to m6A-containing pri-miRNAs promotes pri-miRNA processing by enhancing binding of DGCR8 to pri-miRNA transcripts. Involved in miRNA sorting into exosomes following sumoylation, possibly by binding (m6A)-containing pre-miRNAs. Acts as a regulator of efficiency of mRNA splicing, possibly by binding to m6A-containing pre-mRNAs. Plays a role in the splicing of pyruvate kinase PKM by binding repressively to sequences flanking PKM exon 9, inhibiting exon 9 inclusion and resulting in exon 10 inclusion and production of the PKM M2 isoform. Also plays a role in the activation of the innate immune response. Mechanistically, senses the presence of viral DNA in the nucleus, homodimerizes and is demethylated by JMJD6. In turn, translocates to the cytoplasm where it activates the TBK1-IRF3 pathway, leading to interferon alpha/beta production. The polypeptide is Heterogeneous nuclear ribonucleoproteins A2/B1 (Rattus norvegicus (Rat)).